Reading from the N-terminus, the 364-residue chain is Chorismate synthase (364 aa).

R48 and R54 together coordinate NADP(+). Residues 125-127 (RSS), G282, 297-301 (KPPAS), and R323 contribute to the FMN site.

It belongs to the chorismate synthase family. Homotetramer. It depends on FMNH2 as a cofactor.

It carries out the reaction 5-O-(1-carboxyvinyl)-3-phosphoshikimate = chorismate + phosphate. It functions in the pathway metabolic intermediate biosynthesis; chorismate biosynthesis; chorismate from D-erythrose 4-phosphate and phosphoenolpyruvate: step 7/7. Functionally, catalyzes the anti-1,4-elimination of the C-3 phosphate and the C-6 proR hydrogen from 5-enolpyruvylshikimate-3-phosphate (EPSP) to yield chorismate, which is the branch point compound that serves as the starting substrate for the three terminal pathways of aromatic amino acid biosynthesis. This reaction introduces a second double bond into the aromatic ring system. This is Chorismate synthase from Chloroflexus aurantiacus (strain ATCC 29366 / DSM 635 / J-10-fl).